A 363-amino-acid chain; its full sequence is Cyclin-D1-1 (363 aa).

The interval 39 to 77 is disordered; it reads ELEREGEPAQGSSPSSSLSCAAAAAAAADDDDEDEDEHG. The span at 50-65 shows a compositional bias: low complexity; sequence SSPSSSLSCAAAAAAA. Over residues 66–75 the composition is skewed to acidic residues; the sequence is ADDDDEDEDE.

This sequence belongs to the cyclin family. Cyclin D subfamily.

This Oryza sativa subsp. japonica (Rice) protein is Cyclin-D1-1 (CYCD1-1).